A 101-amino-acid polypeptide reads, in one-letter code: Multivesicular body sorting factor 12 (101 aa).

Methionine 1 bears the N-acetylmethionine mark. Position 94 is a phosphoserine (serine 94).

As to quaternary structure, component of the ESCRT-I complex (endosomal sorting complex required for transport I) which consists of STP22, VPS28, SRN2 and MVB12 in a 1:1:1:1 stoichiometry. Interacts with STP22 and SRN2.

It localises to the cytoplasm. The protein localises to the endosome. The protein resides in the late endosome membrane. Its function is as follows. Component of the ESCRT-I complex, a regulator of vesicular trafficking process. Binds to ubiquitinated cargo proteins and is required for the sorting of endocytic ubiquitinated cargos into multivesicular bodies (MVBs). Appears to be involved in cargo sorting and release of the ESCRT-I complex from the MVBs. This chain is Multivesicular body sorting factor 12 (MVB12), found in Saccharomyces cerevisiae (strain ATCC 204508 / S288c) (Baker's yeast).